The chain runs to 109 residues: U4-lycotoxin-Ls1a (109 aa).

Residues 1 to 22 (MKVLVLFSVLFLTLFSYSSTEA) form the signal peptide. Positions 23–44 (IDEFDSDAEDDMLSLMANEQVR) are excised as a propeptide. The segment at 45–88 (AKACTPRLHDCSHDRHSCCRGELFKDVCYCFYPEGEDKTEVCSC) is knottin domain. Cystine bridges form between cysteine 48–cysteine 63, cysteine 55–cysteine 72, cysteine 62–cysteine 88, and cysteine 74–cysteine 86. A linear cationic cytotoxin domain region spans residues 89–108 (QQPKSHKYIEKVVDKAKTVV).

It belongs to the neurotoxin 19 (CSTX) family. 05 (U4-Lctx) subfamily. Expressed by the venom gland.

The protein localises to the secreted. Functionally, enhances the high-affinity desensitization of human P2RX3 purinoceptors. This Lycosa singoriensis (Wolf spider) protein is U4-lycotoxin-Ls1a.